Consider the following 37-residue polypeptide: Large ribosomal subunit protein bL36 (37 aa).

The protein belongs to the bacterial ribosomal protein bL36 family.

The protein is Large ribosomal subunit protein bL36 of Aromatoleum aromaticum (strain DSM 19018 / LMG 30748 / EbN1) (Azoarcus sp. (strain EbN1)).